The following is a 481-amino-acid chain: Exodeoxyribonuclease I (481 aa).

The region spanning 12–193 (LFYDYETFGK…SSDVYATMNI (182 aa)) is the Exonuclease domain. Positions 15, 17, and 186 each coordinate Mg(2+). Glutamate 17 is a substrate binding site. The 149-residue stretch at 202-350 (PKLFNFFFKY…KLKKFLCSIA (149 aa)) folds into the ExoI SH3-like domain. The 116-residue stretch at 356-471 (NGSNVDLKMY…ELFEYVKYTR (116 aa)) folds into the ExoI C-terminal domain.

Monomer. Interacts with ssb (via C-terminus); this interaction stimulates the exonuclease activity by recruiting the enzyme to its substrate. Mg(2+) serves as cofactor.

It catalyses the reaction Exonucleolytic cleavage in the 3'- to 5'-direction to yield nucleoside 5'-phosphates.. In terms of biological role, degrades single-stranded DNA (ssDNA) in a highly processive manner. Also functions as a DNA deoxyribophosphodiesterase that releases deoxyribose-phosphate moieties following the cleavage of DNA at an apurinic/apyrimidinic (AP) site by either an AP endonuclease or AP lyase. The sequence is that of Exodeoxyribonuclease I (sbcB) from Buchnera aphidicola subsp. Baizongia pistaciae (strain Bp).